The primary structure comprises 425 residues: Spermatogenesis- and oogenesis-specific basic helix-loop-helix-containing protein 2 (425 aa).

Positions 201-252 (KISLLHSSKEKLRRERIKYCCEQLRTLLPYVKGRKNDAASVLEATVDYVKYI) constitute a bHLH domain.

Forms both hetero- and homodimers with SOHLH1.

The protein localises to the nucleus. The protein resides in the cytoplasm. Functionally, transcription regulator of both male and female germline differentiation. Suppresses genes involved in spermatogonial stem cells maintenance, and induces genes important for spermatogonial differentiation. Coordinates oocyte differentiation without affecting meiosis I. The protein is Spermatogenesis- and oogenesis-specific basic helix-loop-helix-containing protein 2 (SOHLH2) of Homo sapiens (Human).